Here is an 86-residue protein sequence, read N- to C-terminus: Anti-adapter protein IraP (86 aa).

Positions 1 to 36 (MKNLIAELLFKLAQKEEESKELCAQVEALEIIVTAM) form a coiled coil.

It belongs to the IraP family. As to quaternary structure, interacts with RssB.

Its subcellular location is the cytoplasm. Functionally, inhibits RpoS proteolysis by regulating RssB activity, thereby increasing the stability of the sigma stress factor RpoS especially during phosphate starvation, but also in stationary phase and during nitrogen starvation. Its effect on RpoS stability is due to its interaction with RssB, which probably blocks the interaction of RssB with RpoS, and the consequent delivery of the RssB-RpoS complex to the ClpXP protein degradation pathway. This Shigella flexneri serotype 5b (strain 8401) protein is Anti-adapter protein IraP.